The primary structure comprises 310 residues: Ribose-phosphate pyrophosphokinase (310 aa).

ATP is bound by residues 34 to 36 (DME) and 93 to 94 (RQ). Residues H127 and D167 each contribute to the Mg(2+) site. K190 is an active-site residue. D-ribose 5-phosphate-binding positions include R192, D216, and 220–224 (DSGGT).

It belongs to the ribose-phosphate pyrophosphokinase family. Class I subfamily. As to quaternary structure, homohexamer. It depends on Mg(2+) as a cofactor.

It is found in the cytoplasm. The enzyme catalyses D-ribose 5-phosphate + ATP = 5-phospho-alpha-D-ribose 1-diphosphate + AMP + H(+). It functions in the pathway metabolic intermediate biosynthesis; 5-phospho-alpha-D-ribose 1-diphosphate biosynthesis; 5-phospho-alpha-D-ribose 1-diphosphate from D-ribose 5-phosphate (route I): step 1/1. In terms of biological role, involved in the biosynthesis of the central metabolite phospho-alpha-D-ribosyl-1-pyrophosphate (PRPP) via the transfer of pyrophosphoryl group from ATP to 1-hydroxyl of ribose-5-phosphate (Rib-5-P). This is Ribose-phosphate pyrophosphokinase from Granulibacter bethesdensis (strain ATCC BAA-1260 / CGDNIH1).